Here is a 335-residue protein sequence, read N- to C-terminus: Glycerol-3-phosphate dehydrogenase [NAD(P)+] (335 aa).

NADPH-binding residues include serine 12, tryptophan 13, and lysine 107. Positions 107, 138, and 140 each coordinate sn-glycerol 3-phosphate. Residue alanine 142 coordinates NADPH. Sn-glycerol 3-phosphate contacts are provided by lysine 193, aspartate 246, serine 256, arginine 257, and asparagine 258. Lysine 193 functions as the Proton acceptor in the catalytic mechanism. Arginine 257 is a binding site for NADPH. The NADPH site is built by valine 281 and glutamate 283.

The protein belongs to the NAD-dependent glycerol-3-phosphate dehydrogenase family.

It localises to the cytoplasm. It catalyses the reaction sn-glycerol 3-phosphate + NAD(+) = dihydroxyacetone phosphate + NADH + H(+). It carries out the reaction sn-glycerol 3-phosphate + NADP(+) = dihydroxyacetone phosphate + NADPH + H(+). It functions in the pathway membrane lipid metabolism; glycerophospholipid metabolism. Its function is as follows. Catalyzes the reduction of the glycolytic intermediate dihydroxyacetone phosphate (DHAP) to sn-glycerol 3-phosphate (G3P), the key precursor for phospholipid synthesis. The chain is Glycerol-3-phosphate dehydrogenase [NAD(P)+] from Geobacter sulfurreducens (strain ATCC 51573 / DSM 12127 / PCA).